The chain runs to 2280 residues: MVYNNGSLRGRKKIEEKYIPMNRKSTSLKDPSRTKNNNYIKTLDTYINEEDSPTKILSKGKKNKNENIKKRINEKDNDTDREDAASLNVDYNKNVMKKYNTRGTFIEKVSSSERNIEHNNNIIRKLGSKDYSKARVQTMTTNIGNHNALKKINPKVPSITSRTKSYTKVMNENKYNNNNSNNSNNNNINSMYYSKKLNNKKYSTEHTQSIDNNNITSKRLNNKKTATDKAQSTSRYCISNSVKKSYSTKGYNTDRSQTMSRYTLQNKKDSNTNTNRKGYSTHRGQIIQDNSNINNQAEKKKRNMSLKKKYIKESSNSTITGSNEKKNSNNILKKNSTCDLNYLNKEYNNNNNMHEHAENVYNINDNEGCSSMQIINDEDVQKNVPEFYTINLGSETKNMGENYIFKNRDKKIKPNIYNERNNMDLMEHKLNDDMSYNFADHIKDIECYINQLNESNKCNIYKECDPSKLISPVYDNVNDNILENNQQLNEYEKHNDILTTSYLKYYSHTNNNNHYYNDEDVHLDLGKTNEGFSNVVKNMDNIPWNETNKKESFSNIKKKIDHTDDRHIAYVDNSSMKHTMNDKDQYVKNVPYNNTMEEVLLLNEKRGNILGSLISKNHDAKRATSNNNNINNNKYYYYDNKYSEHGGDSVSSNIGYPHGYKNNNIYNYVNNIKDLSSPLYCNTKTKRAHKFHTDNIMSDQLNKYEDNNKNDGKFFSGNISSKQKGKNNLTNYTTHSSEYRIKSIESNLTKDYRKSLTYNDIPNFLDYNINNTNVQNSDFGDSHYINRNVSYKNSMNSNDDIQNSNNNNNNNNNNNMVNNPNEYLVYTNEKHYVRINNKLYEKTRDNTYIEVDSNSNFDIINDINSSHNSPLDNIKDNTLYHNTNKKEYSDYVSSYSNINKYEDINLPNNIHVSKDGKYLFKNYSVSQNVSDDNSVQDSFFSRTERSNSQNRYDKNGVNHIEQNYYNNSNRRDDIYYYHNQLKKLERLTQQNIKSGKYQRNIPQNDDNDHNDDDSEIKEVKKDKTKIDMNKHLHLNDKKIFNQVKRENTGVHMNASKTIKNMKEVTYRNINNDTNYNNNNVKINYLYSDELGKNKNRDTPLKTKQHGDSLDNKTELKKKIYNDIINNDIINNNIINNDIIKSGAINNNIVNNNLINNYNADNRNVSNSIFTQHINNINNNFYNSDDERINIIDNNKRMDMTKDESDRFRNNYFVELEKRKKNLGKTNNTTPISLSKNETINNMMINKRNFFNNYISDKVRDKILKREISCSVNTVCSSKTNNKTNSNYSSNNNNDNNNNNNNSNPFILDNSIRKSNIIITTSNNAKLINNTIISKGINNNILNINSNKNKSLNSAKINALGLLSSRNDLNYIMNNNRTSNNHINQHLLYNNRNYSVIKIPNVHKEKRSSKIPHNINIKSNLNLEPNIKTYTNIKTPINIKAYTNIKAPTNIKAPINIKASTNIKAPTNVKAPTNVKAPTNVKAPTNVNAPTNVNAPTNANAPTYVNTPTNIKRQEFSNVTLNYKGISKFDINEDKNTTIIPPLHRQSNSNFPFKNTKLNLNSDMYTEKELIKCKSINNSDIYNYLRNTYNKTPSKFYRTVSYRNMSLKKNKSMLENRKRKTEKKEENLMSTFNYTSEVDSKYIVKKAVVVGCNYVSEERSRLYGSVNDAYVFCRALVKYFDFLPENILLLTDSLPSNAYIYEDFDINRKKYINVDEEENIKNNEPLKKKNIFNLFNTNALYTTLKKTNEEELNCNSCKDVEIKNVDISSEKMNFNLWPTRVNILKAVNWLVRDSIPFGSYVFYFAGKSVQVDNMSGWEGEGYDEAFLCSDPFNKISEHNVITAVQLKDLLLSINESAQMTIILDCSGGQTILDPAGTENSLSYIKGCKQKGIWPITNPTNKVHKAIYDITILNNTSMKKYFCRSRYSKLIEVESTSAMIDPLLQSISSLPVAPKAYCLCAATWEQISIEGLFPIIEFARVSQLKKPESYKTGEGHYQNMNKKNIRAEKSNRNGPNGLINKNNNLSKKTNYEKNFNFTLNMMKMLFSNTNNNENKLDEKEKINRLGFNENDSDYIDDNYNSDDNNNNNYYYNYDGEKGFKNFQENLNNVGQKDVIKNKKFKDNYILVSHGVFTYCLIEAIIEFKEKELKYNILEKKNEQFIPMTLKNLINVIQQKMQNIKYNKLKKINQKPEFTIHPGANATNNNYFVHYSKNIHFQNYKCNFINADLSPFLNVNKAWEEINRTTLRNRKSLSLSSTLINTASSKYFTQKNEQFKNSYSLKY.

Disordered stretches follow at residues 56–83 (ILSK…DRED), 202–284 (YSTE…THRG), 791–819 (YKNS…MVNN), 931–954 (DDNS…RYDK), 994–1015 (SGKY…DDSE), 1278–1306 (KTNN…NPFI), and 1469–1500 (KAPT…NANA). The span at 63-83 (NKNENIKKRINEKDNDTDRED) shows a compositional bias: basic and acidic residues. Polar residues-rich tracts occupy residues 205–219 (EHTQ…TSKR) and 228–278 (DKAQ…NRKG). Low complexity-rich tracts occupy residues 793-819 (NSMN…MVNN) and 931-941 (DDNSVQDSFFS). Low complexity-rich tracts occupy residues 1278–1303 (KTNN…NNSN) and 1482–1500 (APTN…NANA).

It belongs to the peptidase C14B family.

Functionally, protease that cleaves specifically after arginine or lysine residues. This chain is Metacaspase-3, found in Plasmodium falciparum (isolate 3D7).